The primary structure comprises 374 residues: uncharacterized protein (374 aa).

This is an uncharacterized protein from Methanocaldococcus jannaschii (strain ATCC 43067 / DSM 2661 / JAL-1 / JCM 10045 / NBRC 100440) (Methanococcus jannaschii).